We begin with the raw amino-acid sequence, 227 residues long: UPF0758 protein lpp2553 (227 aa).

Residues Arg102–Val225 form the MPN domain. Zn(2+)-binding residues include His173, His175, and Asp186. A JAMM motif motif is present at residues His173 to Asp186.

This sequence belongs to the UPF0758 family.

This is UPF0758 protein lpp2553 from Legionella pneumophila (strain Paris).